The primary structure comprises 366 residues: Aldo-keto reductase AFTS1 (366 aa).

D75 serves as a coordination point for NADP(+). Y80 (proton donor) is an active-site residue. A substrate-binding site is contributed by H172. Residues 202 to 203, Q228, 257 to 267, and 329 to 337 contribute to the NADP(+) site; these read SS, GSLASGRLARP, and SSVERIDEA.

Belongs to the aldo/keto reductase family.

It participates in mycotoxin biosynthesis. In terms of biological role, aldo-keto reductase; part of the gene clusters that mediate the biosynthesis of the host-selective toxins (HSTs) AF-toxins responsible for Alternaria black spot of strawberry disease by the strawberry pathotype. AF-toxin I and III are valine derivatives of 2,3-dyhydroxy-isovaleric acid and 2-hydroxy-isovaleric acid respectively, while AF II is an isoleucine derivative of 2-hydroxy-valeric acid. These derivatives are bound to a 9,10-epoxy-8-hydroxy-9-methyl-decatrienoic acid (EDA) moiety. On cellular level, AF-toxins affect plasma membrane of susceptible cells and cause a sudden increase in loss of K(+) after a few minutes of toxin treatment. The aldo-keto reductase AFTS1 catalyzes the conversion of 2-keto-isovaleric acid (2-KIV) to 2-hydroxy-isovaleric acid (2-HIV) by reduction of its ketone to an alcohol. The acyl-CoA ligase AFT1, the hydrolase AFT2 and the enoyl-CoA hydratases AFT3 and AFT6, but also the polyketide synthase AFT9, the acyl-CoA dehydrogenase AFT10, the cytochrome P450 monooxygenase AFT11 and the oxidoreductase AFT12 are all involved in the biosynthesis of the AK-, AF- and ACT-toxin common EDA structural moiety. The exact function of each enzyme, and of additional enzymes identified within the AF-toxin clusters have still to be determined. This chain is Aldo-keto reductase AFTS1, found in Alternaria alternata (Alternaria rot fungus).